Reading from the N-terminus, the 198-residue chain is dCTP deaminase (198 aa).

DCTP is bound by residues 99–104, 125–127, and Gln-144; these read RSSLGR and TLE. Glu-127 serves as the catalytic Proton donor/acceptor.

It belongs to the dCTP deaminase family. In terms of assembly, homotrimer.

It catalyses the reaction dCTP + H2O + H(+) = dUTP + NH4(+). It participates in pyrimidine metabolism; dUMP biosynthesis; dUMP from dCTP (dUTP route): step 1/2. Functionally, catalyzes the deamination of dCTP to dUTP. This chain is dCTP deaminase, found in Rhodopirellula baltica (strain DSM 10527 / NCIMB 13988 / SH1).